Here is a 323-residue protein sequence, read N- to C-terminus: Beta-ketoacyl-[acyl-carrier-protein] synthase III (323 aa).

Active-site residues include C113 and H250. Positions 251–255 (QANRR) are ACP-binding. The active site involves N280.

It belongs to the thiolase-like superfamily. FabH family. Homodimer.

The protein localises to the cytoplasm. The catalysed reaction is malonyl-[ACP] + acetyl-CoA + H(+) = 3-oxobutanoyl-[ACP] + CO2 + CoA. The protein operates within lipid metabolism; fatty acid biosynthesis. Functionally, catalyzes the condensation reaction of fatty acid synthesis by the addition to an acyl acceptor of two carbons from malonyl-ACP. Catalyzes the first condensation reaction which initiates fatty acid synthesis and may therefore play a role in governing the total rate of fatty acid production. Possesses both acetoacetyl-ACP synthase and acetyl transacylase activities. Its substrate specificity determines the biosynthesis of branched-chain and/or straight-chain of fatty acids. This chain is Beta-ketoacyl-[acyl-carrier-protein] synthase III, found in Sinorhizobium medicae (strain WSM419) (Ensifer medicae).